A 546-amino-acid polypeptide reads, in one-letter code: Putative inactive G-type lectin S-receptor-like serine/threonine-protein kinase SRK (546 aa).

Residues 1–31 (MRGELPNKHHSYTFFVFLFFFLILFPDLSIS) form the signal peptide. Topologically, residues 32–441 (VNTLSATESL…FGERRTIRGK (410 aa)) are extracellular. The Bulb-type lectin domain occupies 34–154 (TLSATESLTI…KINESDEFLW (121 aa)). Residues Asn-46, Asn-120, Asn-147, and Asn-243 are each glycosylated (N-linked (GlcNAc...) asparagine). Positions 293 to 329 (PKDTCDLYGICGPYAYCDMSTSPTCNCIKGFQPLSPQ) constitute an EGF-like; atypical domain. 4 disulfide bridges follow: Cys-297–Cys-309, Cys-303–Cys-317, Cys-378–Cys-403, and Cys-382–Cys-388. The 81-residue stretch at 348-428 (CGEDRFFRLM…DGQDLFVRLA (81 aa)) folds into the PAN domain. An N-linked (GlcNAc...) asparagine glycan is attached at Asn-387. Residues 442–462 (IIGLIIGISLMLVLSFIIYCF) form a helical membrane-spanning segment. Topologically, residues 463–546 (WKKKQKRARA…IVYKGRLLDG (84 aa)) are cytoplasmic. One can recognise a Protein kinase domain in the interval 524-546 (FSDSNILGRGGFGIVYKGRLLDG). 530–538 (LGRGGFGIV) provides a ligand contact to ATP.

It belongs to the protein kinase superfamily. Ser/Thr protein kinase family.

It localises to the cell membrane. In terms of biological role, truncated and inactivated form of SRK, the female specificity determinant of self-incompatibility when active. Most A.thaliana cultivars contain such an inactive form and thus, are self-fertiles. This chain is Putative inactive G-type lectin S-receptor-like serine/threonine-protein kinase SRK (PSEUDOSRKA), found in Arabidopsis thaliana (Mouse-ear cress).